The primary structure comprises 295 residues: Protoheme IX farnesyltransferase 2 (295 aa).

9 helical membrane-spanning segments follow: residues 9 to 29 (ITKP…FFLA), 36 to 56 (FALF…GCVF), 83 to 103 (LTLA…LLYV), 108 to 128 (LAAF…SLWL), 135 to 155 (GTLV…CAVS), 163 to 183 (VTLL…IAIF), 209 to 229 (IVLY…GGYA), 230 to 250 (GLGY…MAWG), and 264 to 284 (VFGF…VDSQ).

It belongs to the UbiA prenyltransferase family. Protoheme IX farnesyltransferase subfamily.

The protein localises to the cell inner membrane. It catalyses the reaction heme b + (2E,6E)-farnesyl diphosphate + H2O = Fe(II)-heme o + diphosphate. It functions in the pathway porphyrin-containing compound metabolism; heme O biosynthesis; heme O from protoheme: step 1/1. Its function is as follows. Converts heme B (protoheme IX) to heme O by substitution of the vinyl group on carbon 2 of heme B porphyrin ring with a hydroxyethyl farnesyl side group. The protein is Protoheme IX farnesyltransferase 2 of Pseudomonas entomophila (strain L48).